We begin with the raw amino-acid sequence, 277 residues long: 3-methyl-2-oxobutanoate hydroxymethyltransferase (277 aa).

Residues D53 and D96 each coordinate Mg(2+). 3-methyl-2-oxobutanoate contacts are provided by residues 53–54, D96, and K126; that span reads DS. E128 serves as a coordination point for Mg(2+). The Proton acceptor role is filled by E195.

Belongs to the PanB family. As to quaternary structure, homodecamer; pentamer of dimers. Mg(2+) serves as cofactor.

It is found in the cytoplasm. The enzyme catalyses 3-methyl-2-oxobutanoate + (6R)-5,10-methylene-5,6,7,8-tetrahydrofolate + H2O = 2-dehydropantoate + (6S)-5,6,7,8-tetrahydrofolate. It participates in cofactor biosynthesis; (R)-pantothenate biosynthesis; (R)-pantoate from 3-methyl-2-oxobutanoate: step 1/2. Functionally, catalyzes the reversible reaction in which hydroxymethyl group from 5,10-methylenetetrahydrofolate is transferred onto alpha-ketoisovalerate to form ketopantoate. The protein is 3-methyl-2-oxobutanoate hydroxymethyltransferase of Prosthecochloris aestuarii (strain DSM 271 / SK 413).